Reading from the N-terminus, the 518-residue chain is Adenine deaminase (518 aa).

Belongs to the metallo-dependent hydrolases superfamily. Adenine deaminase family. Mn(2+) is required as a cofactor.

The enzyme catalyses adenine + H2O + H(+) = hypoxanthine + NH4(+). In Methanoculleus marisnigri (strain ATCC 35101 / DSM 1498 / JR1), this protein is Adenine deaminase.